Here is a 302-residue protein sequence, read N- to C-terminus: uncharacterized protein (302 aa).

The next 9 membrane-spanning stretches (helical) occupy residues 10–30 (VLSV…GVLG), 65–85 (LVLI…IAYL), 102–122 (VAAA…GIFG), 130–150 (IFYD…LSHI), 162–182 (AVFF…LWGL), 190–210 (ILGY…GLTL), 224–244 (LVSG…SYVL), 251–271 (FSVT…VLAI), and 282–302 (SCIF…SVVL).

Belongs to the auxin efflux carrier (TC 2.A.69) family.

The protein localises to the cell membrane. This is an uncharacterized protein from Methanothermobacter thermautotrophicus (strain ATCC 29096 / DSM 1053 / JCM 10044 / NBRC 100330 / Delta H) (Methanobacterium thermoautotrophicum).